The sequence spans 174 residues: MTRILGIDPGSQRTGIGIIDIDEGGRSRHVHHAPLILLGEGDFSQRLKRLLHGLGELIETYRPDEVAIEKVFMGKSAASALKLGQARGAAICAVVMRDLPVHEYAATEVKLALVGKGGADKLQVQHMVGIMLNLKGKLQPDAADALAVAITHAHVRATAQCLGVNTQQAWSRKK.

Active-site residues include aspartate 8, glutamate 69, and aspartate 141. Residues aspartate 8, glutamate 69, and aspartate 141 each contribute to the Mg(2+) site.

The protein belongs to the RuvC family. In terms of assembly, homodimer which binds Holliday junction (HJ) DNA. The HJ becomes 2-fold symmetrical on binding to RuvC with unstacked arms; it has a different conformation from HJ DNA in complex with RuvA. In the full resolvosome a probable DNA-RuvA(4)-RuvB(12)-RuvC(2) complex forms which resolves the HJ. It depends on Mg(2+) as a cofactor.

The protein resides in the cytoplasm. The catalysed reaction is Endonucleolytic cleavage at a junction such as a reciprocal single-stranded crossover between two homologous DNA duplexes (Holliday junction).. In terms of biological role, the RuvA-RuvB-RuvC complex processes Holliday junction (HJ) DNA during genetic recombination and DNA repair. Endonuclease that resolves HJ intermediates. Cleaves cruciform DNA by making single-stranded nicks across the HJ at symmetrical positions within the homologous arms, yielding a 5'-phosphate and a 3'-hydroxyl group; requires a central core of homology in the junction. The consensus cleavage sequence is 5'-(A/T)TT(C/G)-3'. Cleavage occurs on the 3'-side of the TT dinucleotide at the point of strand exchange. HJ branch migration catalyzed by RuvA-RuvB allows RuvC to scan DNA until it finds its consensus sequence, where it cleaves and resolves the cruciform DNA. The chain is Crossover junction endodeoxyribonuclease RuvC from Xanthomonas oryzae pv. oryzae (strain MAFF 311018).